A 1448-amino-acid polypeptide reads, in one-letter code: DNA primase TraC (1448 aa).

Basic and acidic residues-rich tracts occupy residues 844–856, 863–872, and 882–898; these read ARVQ…RDPN, SAAKEARKTA, and DAQR…RDRQ. Disordered regions lie at residues 844–915 and 952–982; these read ARVQ…INVP and QGAA…QQAQ. Over residues 964–982 the composition is skewed to low complexity; sequence AQPAPEAQGEAQKPAQQAQ. The Toprim domain maps to 1237-1325; the sequence is PALVISEGYA…GKAIFPIFAP (89 aa). The disordered stretch occupies residues 1414–1448; it reads ISQVQRDEQQHQEQKHVEKKQQQIEQRPRRAARIG. Over residues 1418 to 1441 the composition is skewed to basic and acidic residues; it reads QRDEQQHQEQKHVEKKQQQIEQRP.

Functionally, required for autonomous replication in E.coli. Transferred into the recipient cell during bacterial conjugation. Catalyzes the synthesis of short oligoribonucleotide primers with CpA or pCpA at their 5'-termini on a single-stranded template DNA. The sequence is that of DNA primase TraC (traC) from Escherichia coli.